The following is a 253-amino-acid chain: 1-(5-phosphoribosyl)-5-[(5-phosphoribosylamino)methylideneamino] imidazole-4-carboxamide isomerase (253 aa).

Aspartate 8 acts as the Proton acceptor in catalysis. Aspartate 131 acts as the Proton donor in catalysis.

The protein belongs to the HisA/HisF family.

Its subcellular location is the cytoplasm. The catalysed reaction is 1-(5-phospho-beta-D-ribosyl)-5-[(5-phospho-beta-D-ribosylamino)methylideneamino]imidazole-4-carboxamide = 5-[(5-phospho-1-deoxy-D-ribulos-1-ylimino)methylamino]-1-(5-phospho-beta-D-ribosyl)imidazole-4-carboxamide. It functions in the pathway amino-acid biosynthesis; L-histidine biosynthesis; L-histidine from 5-phospho-alpha-D-ribose 1-diphosphate: step 4/9. This is 1-(5-phosphoribosyl)-5-[(5-phosphoribosylamino)methylideneamino] imidazole-4-carboxamide isomerase from Polynucleobacter asymbioticus (strain DSM 18221 / CIP 109841 / QLW-P1DMWA-1) (Polynucleobacter necessarius subsp. asymbioticus).